Reading from the N-terminus, the 111-residue chain is uncharacterized protein (111 aa).

Transmembrane regions (helical) follow at residues 3 to 23 (WVLV…LKHA), 24 to 44 (DSLL…ILLI), 54 to 74 (AAYT…GIVL), and 80 to 100 (AAQM…KLFT).

This sequence belongs to the drug/metabolite transporter (DMT) superfamily. Small multidrug resistance (SMR) (TC 2.A.7.1) family.

The protein resides in the cell membrane. This is an uncharacterized protein from Bacillus subtilis (strain 168).